The chain runs to 234 residues: MATVMELKATARPKSGKGAARAERRAGRVPGVIYGDNQPPLPISVEDKELRLRILAGRFLTTVFDVVLDGKKHRVIPRDYHLDPVKDFPIHVDFLRLGAGATIRVSVPLHLKGLESAPGVKRGGTFNIVTHTVDLEAPAESIPQFIEADVSTLDIGVSLHLSDIALPNGVKSVSREDVTLVTIVPPSGFNEEQKAAAAGAAAPAAAAAPAAKAGAAKAPAAAAKAPAAPAAKKK.

The segment at Met-1–Arg-24 is disordered.

It belongs to the bacterial ribosomal protein bL25 family. CTC subfamily. In terms of assembly, part of the 50S ribosomal subunit; part of the 5S rRNA/L5/L18/L25 subcomplex. Contacts the 5S rRNA. Binds to the 5S rRNA independently of L5 and L18.

Its function is as follows. This is one of the proteins that binds to the 5S RNA in the ribosome where it forms part of the central protuberance. This is Large ribosomal subunit protein bL25 from Rhodopseudomonas palustris (strain BisB5).